We begin with the raw amino-acid sequence, 100 residues long: Small ribosomal subunit protein uS14c (100 aa).

Belongs to the universal ribosomal protein uS14 family. As to quaternary structure, part of the 30S ribosomal subunit.

It localises to the plastid. Its subcellular location is the chloroplast. Functionally, binds 16S rRNA, required for the assembly of 30S particles. The chain is Small ribosomal subunit protein uS14c from Aethionema cordifolium (Lebanon stonecress).